The following is a 706-amino-acid chain: Kinesin-like protein KIF2A (706 aa).

Residues 1–217 form a globular region; that stretch reads MATANFGKIQ…LDYRPLTTAD (217 aa). Residues 66–139 are disordered; sequence LVPDEEIEPS…AQQNGSVSDI (74 aa). Phosphoserine is present on S75. Phosphothreonine occurs at positions 78 and 97. S100 carries the phosphoserine modification. At K102 the chain carries N6-acetyllysine. Positions 123 to 139 are enriched in polar residues; sequence FPEQSSSAQQNGSVSDI. S135 and S140 each carry phosphoserine. The tract at residues 165–186 is disordered; the sequence is KLQEKREKRRLQQQELREKRAQ. One can recognise a Kinesin motor domain in the interval 223–553; that stretch reads RICVCVRKRP…LRYANRVKEL (331 aa). 313–320 is a binding site for ATP; sequence GQTGSGKT. 2 positions are modified to phosphoserine: D556 and Q573. Positions 660–699 form a coiled coil; that stretch reads ATQLEAILEQKIDILTELRDKVKSFRAALQEEEQASKQIN.

This sequence belongs to the TRAFAC class myosin-kinesin ATPase superfamily. Kinesin family. MCAK/KIF2 subfamily. Interacts with AURKA and PLK1. Interacts with PSRC1. Interacts with MCRS1; the interaction enhances recruitment of KIF2A to the minus ends of spindle microtubules which promotes chromosome alignment.

It is found in the cytoplasm. The protein resides in the cytoskeleton. The protein localises to the microtubule organizing center. Its subcellular location is the centrosome. It localises to the spindle pole. It is found in the spindle. Plus end-directed microtubule-dependent motor required for normal brain development. May regulate microtubule dynamics during axonal growth. Required for normal progression through mitosis. Required for normal congress of chromosomes at the metaphase plate. Required for normal spindle dynamics during mitosis. Promotes spindle turnover. Implicated in formation of bipolar mitotic spindles. Has microtubule depolymerization activity. This is Kinesin-like protein KIF2A (KIF2A) from Homo sapiens (Human).